The primary structure comprises 878 residues: MTKFTTEEVRSKFITYFKTNNHTHVPASSLIPQNDPSLMFVNSGMVQFKNVFTGQEKRPYNKAVTSQKSLRAGGKHNDLENVGYTARHHTFFEMLGNFSFGDYFKEQAIYYAWNLLTKKFELPKNKLYVTIYHTDDEAASYWKKIAGFGDDRIIRIKTNDNFWSMGDTGPCGPCSEIFYDHGENIYGGLPGTKDEDGDRFIEILNMVFMQYEQVDKDTRIELPQKSIDTGMGLERMTAILQHVNNNYDIDLFQKIIDYTENIVKVKVKGEAKFSYRVIADHLRASSFLIADGVIPSNEGRGYVLRRIMRRSMRHAHMLGSKEPLMYKLLPKLVDLMGNIYPELKRSESFISNILEQEEIRFKTTLERGLKLLSEETETLTKGDKLSGEIAFKLYDTYGFPLDLTKDILKNYDISVDHQGFKEQMLAQKERARKSWLGSGEYKTNQLWFDIKEQYGSTEFLGYTLNEAECKIIVLIKDNNLVNNIQETDTQFLLISNQTPFYGESGGQMGDNGTIFAKDSEVEVIDTLKYLGSIIVHKCILKKGKIHVGENANFSIDVKYRQNLRIHHSATHILHAVLHEVLGKHVTQKGSLVAPTYLRFDISYSKAVTNEEITLIEDKVNEIIRANHEVNTTLMATEDAVKQGAMALFGEKYDSEVRVVKMGNNSLELCGGTHVRRLGDIGCFKITNESAIAAGIRRIEAVCGEFVIKLMREKENLLKSVESSLKTNKNELITKVNNILERNKGLEKELEKVHLAHLDLSIDQINKEAEEIKGVKLIYQYIENLNNKVLRQAAENLTKKVEDLIVVYIVGNSDKLSITVAVSKAITDKFNAVNIAKELSLFLGGTGGGGQASLAQAGGHDIGKLNKIHEKLYSLLTVL.

The Zn(2+) site is built by His567, His571, Cys669, and His673.

The protein belongs to the class-II aminoacyl-tRNA synthetase family. Requires Zn(2+) as cofactor.

It is found in the cytoplasm. The enzyme catalyses tRNA(Ala) + L-alanine + ATP = L-alanyl-tRNA(Ala) + AMP + diphosphate. Catalyzes the attachment of alanine to tRNA(Ala) in a two-step reaction: alanine is first activated by ATP to form Ala-AMP and then transferred to the acceptor end of tRNA(Ala). Also edits incorrectly charged Ser-tRNA(Ala) and Gly-tRNA(Ala) via its editing domain. The polypeptide is Alanine--tRNA ligase (Rickettsia canadensis (strain McKiel)).